Here is a 160-residue protein sequence, read N- to C-terminus: Phosphopantetheine adenylyltransferase (160 aa).

Residue S11 participates in substrate binding. ATP contacts are provided by residues 11–12 (SF) and H19. Residues K43, L75, and R89 each contribute to the substrate site. ATP-binding positions include 90–92 (GLR), E100, and 125–131 (YSFISSS).

Belongs to the bacterial CoaD family. Homohexamer. Mg(2+) serves as cofactor.

The protein resides in the cytoplasm. It carries out the reaction (R)-4'-phosphopantetheine + ATP + H(+) = 3'-dephospho-CoA + diphosphate. It participates in cofactor biosynthesis; coenzyme A biosynthesis; CoA from (R)-pantothenate: step 4/5. Reversibly transfers an adenylyl group from ATP to 4'-phosphopantetheine, yielding dephospho-CoA (dPCoA) and pyrophosphate. In Staphylococcus aureus (strain Mu3 / ATCC 700698), this protein is Phosphopantetheine adenylyltransferase.